A 94-amino-acid polypeptide reads, in one-letter code: MNPHQIIKRPLITEKNTNLMRFNKYSFEVDRNATKPQIKRAIEEIFNVRVTAVHTMNVRGKLRRRGRQYGYTADWKKAIVTLAEGDRIDLFEGA.

Belongs to the universal ribosomal protein uL23 family. In terms of assembly, part of the 50S ribosomal subunit. Contacts protein L29, and trigger factor when it is bound to the ribosome.

Its function is as follows. One of the early assembly proteins it binds 23S rRNA. One of the proteins that surrounds the polypeptide exit tunnel on the outside of the ribosome. Forms the main docking site for trigger factor binding to the ribosome. The sequence is that of Large ribosomal subunit protein uL23 from Roseiflexus sp. (strain RS-1).